The chain runs to 230 residues: Mitochondrial fission factor homolog B (230 aa).

Residues 1–210 are Cytoplasmic-facing; sequence MSGAAFPSPT…ENKERAKREM (210 aa). A disordered region spans residues 117 to 153; that stretch reads EQTSSVSHPSEEVRTQTKTRRERSVSENAGVHHNGPL. Serine 142 bears the Phosphoserine mark. A coiled-coil region spans residues 179 to 210; it reads VDATSLRRQIVKLNRRLQLLEEENKERAKREM. Residues 211 to 228 traverse the membrane as a helical; Anchor for type IV membrane protein segment; that stretch reads VMYSITVAFWLVNSWVWF. Residues 229–230 lie on the Extracellular side of the membrane; that stretch reads RR.

It belongs to the Tango11 family.

It is found in the mitochondrion outer membrane. Its subcellular location is the peroxisome. Its function is as follows. Plays a role in mitochondrial and peroxisomal fission. Promotes the recruitment and association of the fission mediator dynamin-related protein 1 (DNM1L) to the mitochondrial surface. This Danio rerio (Zebrafish) protein is Mitochondrial fission factor homolog B.